Reading from the N-terminus, the 322-residue chain is tRNA-dihydrouridine synthase B (322 aa).

Residues 16–18 (PMA) and Q70 contribute to the FMN site. The active-site Proton donor is C100. FMN is bound by residues K139, 200–202 (NGD), and 224–225 (GR).

The protein belongs to the Dus family. DusB subfamily. It depends on FMN as a cofactor.

The catalysed reaction is a 5,6-dihydrouridine in tRNA + NAD(+) = a uridine in tRNA + NADH + H(+). The enzyme catalyses a 5,6-dihydrouridine in tRNA + NADP(+) = a uridine in tRNA + NADPH + H(+). Functionally, catalyzes the synthesis of 5,6-dihydrouridine (D), a modified base found in the D-loop of most tRNAs, via the reduction of the C5-C6 double bond in target uridines. In Vibrio vulnificus (strain CMCP6), this protein is tRNA-dihydrouridine synthase B.